Consider the following 279-residue polypeptide: Large ribosomal subunit protein uL2 (279 aa).

The interval 222-279 (GMAMNPVDHPMGGGEGKSKSGGGRRHPKSPWGQLAKGLKTRNKKKASQKLIVRGRNAK) is disordered. Gly residues predominate over residues 232–242 (MGGGEGKSKSG). The segment covering 259–268 (LKTRNKKKAS) has biased composition (basic residues).

The protein belongs to the universal ribosomal protein uL2 family. In terms of assembly, part of the 50S ribosomal subunit. Forms a bridge to the 30S subunit in the 70S ribosome.

Its function is as follows. One of the primary rRNA binding proteins. Required for association of the 30S and 50S subunits to form the 70S ribosome, for tRNA binding and peptide bond formation. It has been suggested to have peptidyltransferase activity; this is somewhat controversial. Makes several contacts with the 16S rRNA in the 70S ribosome. This Chlorobium phaeobacteroides (strain DSM 266 / SMG 266 / 2430) protein is Large ribosomal subunit protein uL2.